A 904-amino-acid chain; its full sequence is MNAPASPAVQTYDATGATPVMQQFFEMKARHPDALIFFRMGDFYELFFDDAYKAAAALGISQTFRGTHNGQPIPMAGVPQHAAEAYLSKLIRLGFKVAVCEQMEDPAEARKRGSKSVVRRDIVRVVTPGTLTEDGLLDARGANRLAAVAIRAGQAAVAAVELSTGEVECFLVAKDAVGAILAALAPSETLVADRLLSDDLLAQTLKICGGLIQPMPSALSEPQASETRVKRLYGVDTLDGFGGLSAAEIGALGLIAAHLEMTQAGKLPALRAPRRAAEADVMSIDPATRSSLEIDRAQNGDRSGSLLAAIDRTVTAGGARMLASRLARPLLDPHAIDARLDAVEWFVDHRGLRERLREVLKGAGDMARALSRLALGRGGPRDLGCLKDGLKTGEKLAGMVGGSGDPLSPPPAQLEGALKALTPSLQEGLSRLLAQLETGLGPDLPALARDGGYVAAGVRPELDQARALRDDSRRVVAALESRLIQESGVPLKIRHNGVLGYFVEATAGKADPLFQPPLNATFIHRQTLANQVRFTTVELADLDARIAQAAERALAMEVAAFEDWRAEAVALAEPIQLAAEALAKLDVAAALAEWAEDAGAVRPSVDKSLAFEARAARHPVVEAAVKRAGDPYTPNDCCLDAAGERGARLSIVTGPNMAGKSTFLRQNAILAILAQSGCYVPAKSLRLGVIDRLFSRVGAGDDLARGRSTFMMEMVETAAILTQASPRSLVILDEIGRGTATYDGLAIAWACAEALHDTNRCRALFATHYHELATLETRLAHVSNLSLRAKEWNGDLVFLHEAAAGPADRSYGVQVAKLAGVPPAVVARAKEVLDRLESKTESPARLDDLPLFASHAPGPLNQFGAPVQAAPSRTDAALGDLDVDGMSPREALDALYRLKALLKT.

An ATP-binding site is contributed by 654–661; it reads GPNMAGKS.

The protein belongs to the DNA mismatch repair MutS family.

Functionally, this protein is involved in the repair of mismatches in DNA. It is possible that it carries out the mismatch recognition step. This protein has a weak ATPase activity. This is DNA mismatch repair protein MutS from Caulobacter sp. (strain K31).